A 61-amino-acid chain; its full sequence is Probable tautomerase LMOf2365_2536 (61 aa).

Catalysis depends on Pro-2, which acts as the Proton acceptor; via imino nitrogen.

This sequence belongs to the 4-oxalocrotonate tautomerase family.

The chain is Probable tautomerase LMOf2365_2536 from Listeria monocytogenes serotype 4b (strain F2365).